The primary structure comprises 580 residues: Adenine deaminase (580 aa).

This sequence belongs to the metallo-dependent hydrolases superfamily. Adenine deaminase family. Mn(2+) is required as a cofactor.

It catalyses the reaction adenine + H2O + H(+) = hypoxanthine + NH4(+). The sequence is that of Adenine deaminase from Listeria monocytogenes serovar 1/2a (strain ATCC BAA-679 / EGD-e).